The primary structure comprises 214 residues: Thymidylate kinase (214 aa).

ATP is bound at residue 7–14 (GIEGAGKT).

Belongs to the thymidylate kinase family.

It carries out the reaction dTMP + ATP = dTDP + ADP. Functionally, phosphorylation of dTMP to form dTDP in both de novo and salvage pathways of dTTP synthesis. This is Thymidylate kinase from Desulfosudis oleivorans (strain DSM 6200 / JCM 39069 / Hxd3) (Desulfococcus oleovorans).